Here is a 173-residue protein sequence, read N- to C-terminus: Peptide deformylase (173 aa).

Residues cysteine 91 and histidine 133 each contribute to the Fe cation site. Glutamate 134 is a catalytic residue. Histidine 137 serves as a coordination point for Fe cation.

This sequence belongs to the polypeptide deformylase family. It depends on Fe(2+) as a cofactor.

It catalyses the reaction N-terminal N-formyl-L-methionyl-[peptide] + H2O = N-terminal L-methionyl-[peptide] + formate. Removes the formyl group from the N-terminal Met of newly synthesized proteins. Requires at least a dipeptide for an efficient rate of reaction. N-terminal L-methionine is a prerequisite for activity but the enzyme has broad specificity at other positions. The polypeptide is Peptide deformylase (Blochmanniella pennsylvanica (strain BPEN)).